The primary structure comprises 1470 residues: Histone acetyltransferase HAC4 (1470 aa).

Positions 1 to 10 (MNNNKEVPQN) are enriched in polar residues. Disordered stretches follow at residues 1 to 20 (MNNN…SSSA) and 342 to 376 (TNFQ…HSQN). Positions 11-20 (SVAVSSSSSA) are enriched in low complexity. A compositionally biased stretch (polar residues) spans 342–365 (TNFQSAPNNRDNLPQVSQQLSNHG). The TAZ-type 1 zinc finger occupies 416 to 495 (GQTSSNTVLR…SISCRTCVAV (80 aa)). Residues 518–566 (SSKCQPKKSSKSRQAYKKGGAEAPSVDADLQRSIKRPKLHRPSQNITPE) are disordered. The segment covering 522–533 (QPKKSSKSRQAY) has biased composition (basic residues). The PHD-type zinc-finger motif lies at 764-841 (HYVCAPCYNE…KYTCPSCYIQ (78 aa)). Positions 856–1293 (VPGATSLPVT…ILYHLHNPTA (438 aa)) constitute a CBP/p300-type HAT domain. Acetyl-CoA-binding positions include 979 to 981 (LDS), 998 to 999 (RT), and Trp-1054. ZZ-type zinc fingers lie at residues 1175 to 1238 (HLQH…IKDV) and 1295 to 1347 (AFAT…SSTD). Residues Cys-1180, Cys-1183, Cys-1195, Cys-1198, Cys-1204, Cys-1207, His-1220, His-1228, Cys-1300, Cys-1303, Cys-1315, Cys-1318, Cys-1324, Cys-1327, His-1335, and His-1337 each coordinate Zn(2+). The TAZ-type 2 zinc-finger motif lies at 1358 to 1436 (SQSYQVKLEK…KCTVPKCSGL (79 aa)).

As to expression, rosette leaves, stems and flowers.

The protein resides in the nucleus. The enzyme catalyses L-lysyl-[protein] + acetyl-CoA = N(6)-acetyl-L-lysyl-[protein] + CoA + H(+). Functionally, acetyltransferase enzyme. Acetylates histones, giving a specific tag for transcriptional activation. The polypeptide is Histone acetyltransferase HAC4 (HAC4) (Arabidopsis thaliana (Mouse-ear cress)).